The chain runs to 341 residues: Protein huluwa (341 aa).

At 1–36 (MVTLSPAYLPSDGGTQAASAAPSVEENWVVQPSLTL) the chain is on the extracellular side. Residues 37-57 (LVLLLVPCVLLLFFLNCFLLF) traverse the membrane as a helical segment. Over 58–341 (HRLPAFSLRK…PMMCSKQYWI (284 aa)) the chain is Cytoplasmic. A VPPNSP motif motif is present at residues 206–211 (VPPNTP).

The protein belongs to the huluwa family. In terms of assembly, interacts with axin1; leading to promote the tankyrase-mediated degradation of axin. Interacts with axin2; leading to promote the tankyrase-mediated degradation of axin.

The protein resides in the cell membrane. In terms of biological role, key maternal determinant of the dorsal organizer and body axis formation in vertebrates that acts by promoting stabilization of beta-catenin (ctnnb1). Localizes on the plasma membrane of the future dorsal blastomeres in early blastulas and binds to and promotes the tankyrase-mediated degradation of axin (axin1 and axin2). Axin degradation results in stabilization and nuclear translocation of beta-catenin (ctnnb1) for activating organizer-specific target gene expression. The polypeptide is Protein huluwa (Xenopus laevis (African clawed frog)).